We begin with the raw amino-acid sequence, 142 residues long: Hemoglobin subunit alpha (142 aa).

Residues 2 to 142 (VLSPADKTNI…VSTVLTSKYR (141 aa)) form the Globin domain. Residue S4 is modified to Phosphoserine. K8 carries the N6-succinyllysine modification. T9 carries the phosphothreonine modification. An N6-succinyllysine modification is found at K12. K17 carries the post-translational modification N6-acetyllysine; alternate. At K17 the chain carries N6-succinyllysine; alternate. Phosphotyrosine is present on Y25. The residue at position 36 (S36) is a Phosphoserine. At K41 the chain carries N6-succinyllysine. Residue S50 is modified to Phosphoserine. H59 provides a ligand contact to O2. H88 contributes to the heme b binding site. S103 carries the post-translational modification Phosphoserine. Position 109 is a phosphothreonine (T109). S125 bears the Phosphoserine mark. 2 positions are modified to phosphothreonine: T135 and T138. At S139 the chain carries Phosphoserine.

This sequence belongs to the globin family. Heterotetramer of two alpha chains and two beta chains. Red blood cells.

In terms of biological role, involved in oxygen transport from the lung to the various peripheral tissues. Its function is as follows. Hemopressin acts as an antagonist peptide of the cannabinoid receptor CNR1. Hemopressin-binding efficiently blocks cannabinoid receptor CNR1 and subsequent signaling. This chain is Hemoglobin subunit alpha (HBA), found in Canis latrans (Coyote).